The chain runs to 176 residues: Large ribosomal subunit protein uL10 (176 aa).

This sequence belongs to the universal ribosomal protein uL10 family. In terms of assembly, part of the ribosomal stalk of the 50S ribosomal subunit. The N-terminus interacts with L11 and the large rRNA to form the base of the stalk. The C-terminus forms an elongated spine to which L12 dimers bind in a sequential fashion forming a multimeric L10(L12)X complex.

In terms of biological role, forms part of the ribosomal stalk, playing a central role in the interaction of the ribosome with GTP-bound translation factors. The polypeptide is Large ribosomal subunit protein uL10 (Sorangium cellulosum (strain So ce56) (Polyangium cellulosum (strain So ce56))).